The chain runs to 100 residues: Large ribosomal subunit protein uL23 (100 aa).

Belongs to the universal ribosomal protein uL23 family. As to quaternary structure, part of the 50S ribosomal subunit. Contacts protein L29, and trigger factor when it is bound to the ribosome.

One of the early assembly proteins it binds 23S rRNA. One of the proteins that surrounds the polypeptide exit tunnel on the outside of the ribosome. Forms the main docking site for trigger factor binding to the ribosome. The sequence is that of Large ribosomal subunit protein uL23 from Yersinia pestis bv. Antiqua (strain Antiqua).